Reading from the N-terminus, the 447-residue chain is N-succinylarginine dihydrolase (447 aa).

Substrate contacts are provided by residues 19–28 (AGLSFGNEAS), N110, and 137–138 (HR). Residue E174 is part of the active site. Substrate is bound at residue R212. The active site involves H248. D250 and N359 together coordinate substrate. Catalysis depends on C365, which acts as the Nucleophile.

This sequence belongs to the succinylarginine dihydrolase family. Homodimer.

The catalysed reaction is N(2)-succinyl-L-arginine + 2 H2O + 2 H(+) = N(2)-succinyl-L-ornithine + 2 NH4(+) + CO2. It functions in the pathway amino-acid degradation; L-arginine degradation via AST pathway; L-glutamate and succinate from L-arginine: step 2/5. Functionally, catalyzes the hydrolysis of N(2)-succinylarginine into N(2)-succinylornithine, ammonia and CO(2). The chain is N-succinylarginine dihydrolase from Escherichia coli O81 (strain ED1a).